Here is a 304-residue protein sequence, read N- to C-terminus: Putative HTH-type transcriptional regulatory protein Memar_2347 (304 aa).

The 58-residue stretch at 132–189 (LREVRERFRMSLGDLASHLGVSRRTISKYESGMGTTLDVAIKLEEIFNAPLVETIELL) folds into the HTH cro/C1-type domain. The H-T-H motif DNA-binding region spans 143-162 (LGDLASHLGVSRRTISKYES).

In Methanoculleus marisnigri (strain ATCC 35101 / DSM 1498 / JR1), this protein is Putative HTH-type transcriptional regulatory protein Memar_2347.